The primary structure comprises 406 residues: Corticosteroid-binding globulin (406 aa).

A signal peptide spans 1–22; that stretch reads MLLTLYACLLWLSTSGLWTSQA. Residues Asn-95, Asn-119, and Asn-223 are each glycosylated (N-linked (GlcNAc...) asparagine). Gln-253 provides a ligand contact to cortisol. A glycan (N-linked (GlcNAc...) asparagine) is linked at Asn-259. Gln-285 and Trp-394 together coordinate cortisol.

Belongs to the serpin family.

The protein resides in the secreted. Functionally, major transport protein for glucocorticoids and progestins in the blood of almost all vertebrate species. This chain is Corticosteroid-binding globulin (Serpina6), found in Sus scrofa (Pig).